We begin with the raw amino-acid sequence, 179 residues long: ADP-ribosylation factor 1-like 1 (179 aa).

Glycine 2 carries the N-myristoyl glycine lipid modification. The important for the stable binding to the membranes stretch occupies residues 3–16 (LFFSKISSFMFPNI). GTP is bound by residues 24–32 (GLDGAGKTT), 126–129 (NKQD), and alanine 160.

This sequence belongs to the small GTPase superfamily. Arf family.

It localises to the golgi apparatus membrane. The catalysed reaction is GTP + H2O = GDP + phosphate + H(+). With respect to regulation, alternates between an inactive GDP-bound form and an active GTP-bound form. Activated by a guanine nucleotide-exchange factor (GEF) and inactivated by GTPase-activating protein (GAP). In terms of biological role, small GTPase involved in protein trafficking between different compartments. Modulates vesicle budding and uncoating within the Golgi complex. In its GTP-bound form, triggers the recruitment of coatomer proteins to the Golgi membrane. The hydrolysis of ARF1-bound GTP, which is mediated by ARFGAPs proteins, is required for dissociation of coat proteins from Golgi membranes and vesicles. The sequence is that of ADP-ribosylation factor 1-like 1 (arf-1.1) from Caenorhabditis elegans.